We begin with the raw amino-acid sequence, 958 residues long: MSKKRLYEIAKELGKESKEVVARAKELGLDVKSHSSSVEEAVAAKIAASFKPAAAPKVEAKPAAPKVSAEKKAEKSEPAKPAVAKEEAKPAAPKASAEKKAEKSEPVKPAVAKEEAKPAEPVTPKTEKVAAKPQSRNFKAEREARAKEQAERRKQNKGNNRDQQQNGNRQKNDGRNGGKQGQSNRDNRRFNDQAKKQQGQQKRRNERRQQEDKRSNQAAPRIDFKARAAALKAEQNAEYARSSEERFKQYQAAKEALAQANKRKEPEEIFEEAAKLAEQAQQVQAVVEVVPEKKEPAVDTRRKKQARPDKNRDDYDHEEDGPRKQQKNRSSQNQVRNQKNSNWNNNKKNKKGNNKNNRNQTPKPVTERKFHELPTEFEYTDGMTVAEIAKRIKREPAEIVKKLFMMGVMATQNQSLDGETIELLMVDYGIEAKQKVEVDNADIERFFVEDGYLNEDELVERPPVVTIMGHVDHGKTTLLDTLRNSRVATGEAGGITQHIGAYQIVENGKKITFLDTPGHAAFTSMRARGASVTDITILVVAADDGVMPQTIEAINHSKAANVPIIVAINKIDKPGANPERVIGELAEHGVMSTAWGGDSEFVEISAKFNQNIEELLETVLLVAEIQELKADPTVRAIGTVIEARLDKGKGAVATLLVQQGTLNVQDPIVVGNTFGRVRAMTNDLGRRVKVAGPSTPVSITGLNEAPMAGDHFAVYEDEKSARAAGEERAKRALMKQRQATQRVSLENLFDTLKAGELKSVNVIIKADVQGSVEALSASLQKIDVEGVKVTIVHSAVGAINESDVTLAEASNAFIVGFNVRPTPQARQQAEADDVEIRLHSIIYKVIEEMEEAMKGMLDPEFEEKVIGEAVIRETFKVSKVGTIGGFMVINGKVARDSKVRVIRDGVVIYDGELASLKHYKDDVKEVTNGREGGLMIDGYNDIKMDDVIEAYVMEEIKR.

The segment covering 50-67 (FKPAAAPKVEAKPAAPKV) has biased composition (low complexity). Disordered regions lie at residues 50–224 (FKPA…RIDF) and 288–374 (EVVP…HELP). 3 stretches are compositionally biased toward basic and acidic residues: residues 68–89 (SAEK…EEAK), 96–118 (SAEK…EAKP), and 138–153 (FKAE…AERR). The segment covering 157-169 (KGNNRDQQQNGNR) has biased composition (low complexity). 2 stretches are compositionally biased toward basic and acidic residues: residues 185 to 195 (RDNRRFNDQAK) and 290 to 323 (VPEK…DGPR). Residues 337–346 (NQKNSNWNNN) are compositionally biased toward low complexity. Residues 365–374 (VTERKFHELP) are compositionally biased toward basic and acidic residues. In terms of domain architecture, tr-type G spans 460-627 (ERPPVVTIMG…TVLLVAEIQE (168 aa)). A G1 region spans residues 469–476 (GHVDHGKT). 469–476 (GHVDHGKT) serves as a coordination point for GTP. Positions 494-498 (GITQH) are G2. The G3 stretch occupies residues 515–518 (DTPG). GTP is bound by residues 515 to 519 (DTPGH) and 569 to 572 (NKID). Positions 569–572 (NKID) are G4. Residues 605–607 (SAK) form a G5 region.

It belongs to the TRAFAC class translation factor GTPase superfamily. Classic translation factor GTPase family. IF-2 subfamily.

Its subcellular location is the cytoplasm. One of the essential components for the initiation of protein synthesis. Protects formylmethionyl-tRNA from spontaneous hydrolysis and promotes its binding to the 30S ribosomal subunits. Also involved in the hydrolysis of GTP during the formation of the 70S ribosomal complex. The polypeptide is Translation initiation factor IF-2 (Streptococcus pneumoniae serotype 4 (strain ATCC BAA-334 / TIGR4)).